Reading from the N-terminus, the 240-residue chain is Regulatory protein HlyX (240 aa).

An essential for the oxygen-regulated activity region spans residues 15–28 (CTIHCQNCSISQLC). Residues 163–236 (MSAEEKLAAF…GKYITINRMD (74 aa)) form the HTH crp-type domain. A DNA-binding region (H-T-H motif) is located at residues 196 to 215 (RGDIGNYLGLTIETISRLLG).

It localises to the cytoplasm. Its function is as follows. Confers a hemolytic phenotype on E.coli. May regulate, rather than mediate, hemolytic activity. This chain is Regulatory protein HlyX (hlyX), found in Actinobacillus pleuropneumoniae (Haemophilus pleuropneumoniae).